A 445-amino-acid polypeptide reads, in one-letter code: Chromosomal replication initiator protein DnaA (445 aa).

The tract at residues 1–73 (MSTHLTETWE…VNALKLLTSK (73 aa)) is domain I, interacts with DnaA modulators. Residues 73–106 (KKYNIDFIVTTEEKIEKNHNNEKSNIVVNDEMST) are domain II. Residues 107–323 (MLNPKYTFDS…GALIRIVAFS (217 aa)) form a domain III, AAA+ region region. ATP-binding residues include glycine 151, glycine 153, lysine 154, and threonine 155. Positions 324–445 (SLTNKEISVD…KELNKRINQK (122 aa)) are domain IV, binds dsDNA.

Belongs to the DnaA family. In terms of assembly, oligomerizes as a right-handed, spiral filament on DNA at oriC.

It is found in the cytoplasm. Functionally, plays an essential role in the initiation and regulation of chromosomal replication. ATP-DnaA binds to the origin of replication (oriC) to initiate formation of the DNA replication initiation complex once per cell cycle. Binds the DnaA box (a 9 base pair repeat at the origin) and separates the double-stranded (ds)DNA. Forms a right-handed helical filament on oriC DNA; dsDNA binds to the exterior of the filament while single-stranded (ss)DNA is stabiized in the filament's interior. The ATP-DnaA-oriC complex binds and stabilizes one strand of the AT-rich DNA unwinding element (DUE), permitting loading of DNA polymerase. After initiation quickly degrades to an ADP-DnaA complex that is not apt for DNA replication. Binds acidic phospholipids. This Clostridium botulinum (strain Okra / Type B1) protein is Chromosomal replication initiator protein DnaA.